The sequence spans 653 residues: 4-hydroxy-2,2'-bipyrrole-5-methanol synthase PigH (653 aa).

The region spanning Glu-7 to Glu-84 is the Carrier domain. An O-(pantetheine 4'-phosphoryl)serine modification is found at Ser-45. Position 354-355 (Gly-354–Tyr-355) interacts with pyridoxal 5'-phosphate. Substrate is bound at residue His-379. Ser-426, His-454, and Thr-482 together coordinate pyridoxal 5'-phosphate. At Lys-485 the chain carries N6-(pyridoxal phosphate)lysine. A helical transmembrane segment spans residues Val-512–Met-532.

Pyridoxal 5'-phosphate is required as a cofactor.

It localises to the membrane. The protein operates within antibiotic biosynthesis; prodigiosin biosynthesis. Functionally, involved in the biosynthesis of 4-methoxy-2,2'-bipyrrole-5-carbaldehyde (MBC), one of the terminal products involved in the biosynthesis of the red antibiotic prodigiosin (Pig). Carrier of the L-malonyl group (malonyl-S-PigH), which is decarboxylated by PigJ to yield a C2 carbanion acetyl-S-PigH. Then the pyrrolyl group of pyrrolyl-S-cysteinyl PigJ intermediate is captured by the C2 carbanion acetyl-S-PigH to yield the pyrrolyl-beta-ketoacyl-S-PigH. In the last step, PigH catalyzes the decarboxylative condensation between the pyrrolyl-beta-ketoacyl (pyrrolyl-beta-ketoacyl-S-PigH) and L-serine to yield 4-hydroxy-2,2'-bipyrrole-5-methanol (HBM). The polypeptide is 4-hydroxy-2,2'-bipyrrole-5-methanol synthase PigH (Serratia sp. (strain ATCC 39006) (Prodigiosinella confusarubida)).